The following is a 629-amino-acid chain: Probable potassium transport system protein Kup 3 (629 aa).

12 helical membrane-spanning segments follow: residues 20 to 40, 54 to 74, 106 to 126, 143 to 163, 171 to 191, 212 to 232, 253 to 273, 291 to 311, 343 to 363, 372 to 392, 400 to 420, and 425 to 445; these read LSLS…LYTF, VTTI…IASV, PFII…GTIT, PSLK…LFAI, IGKA…ILGA, FLFS…LCVT, WFGL…ALVL, FLLP…QAII, IYIG…IIGF, AYGI…FIAL, IIKS…FFAA, and FING…MMYI.

It belongs to the HAK/KUP transporter (TC 2.A.72) family.

The protein resides in the cell inner membrane. The catalysed reaction is K(+)(in) + H(+)(in) = K(+)(out) + H(+)(out). In terms of biological role, transport of potassium into the cell. Likely operates as a K(+):H(+) symporter. The sequence is that of Probable potassium transport system protein Kup 3 from Legionella pneumophila (strain Corby).